The primary structure comprises 128 residues: Small nuclear ribonucleoprotein associated homolog 13 (128 aa).

This sequence belongs to the eukaryotic ribosomal protein eL8 family.

Its subcellular location is the nucleus. It is found in the nucleolus. Binds to the 5'-stem-loop of U4 snRNA and may play a role in the late stage of spliceosome assembly. The protein undergoes a conformational change upon RNA-binding. The chain is Small nuclear ribonucleoprotein associated homolog 13 from Caenorhabditis elegans.